Reading from the N-terminus, the 912-residue chain is Protein translocase subunit SecA (912 aa).

ATP-binding positions include Gln-87, 105–109 (GEGKT), and Asp-508. The interval 855-912 (QHQDAGGYGADEEVEQMQGGNAPVPVSQVTRDEPKVGRNDPCPCGSGKKYKHCHGQLS) is disordered. The Zn(2+) site is built by Cys-896, Cys-898, Cys-907, and His-908. The segment covering 902–912 (KKYKHCHGQLS) has biased composition (basic residues).

Belongs to the SecA family. Monomer and homodimer. Part of the essential Sec protein translocation apparatus which comprises SecA, SecYEG and auxiliary proteins SecDF-YajC and YidC. Zn(2+) serves as cofactor.

It localises to the cell inner membrane. It is found in the cytoplasm. The enzyme catalyses ATP + H2O + cellular proteinSide 1 = ADP + phosphate + cellular proteinSide 2.. Its function is as follows. Part of the Sec protein translocase complex. Interacts with the SecYEG preprotein conducting channel. Has a central role in coupling the hydrolysis of ATP to the transfer of proteins into and across the cell membrane, serving both as a receptor for the preprotein-SecB complex and as an ATP-driven molecular motor driving the stepwise translocation of polypeptide chains across the membrane. In Xanthomonas campestris pv. campestris (strain B100), this protein is Protein translocase subunit SecA.